The sequence spans 385 residues: cAMP-dependent protein kinase regulatory subunit (385 aa).

Positions 1–22 (MSSTGFTSPFGNANPFGSSGRS) are enriched in polar residues. Disordered stretches follow at residues 1–51 (MSST…GVKN) and 77–111 (DFPA…PVHP). The tract at residues 1 to 128 (MSSTGFTSPF…RLKKAISGNF (128 aa)) is dimerization and phosphorylation. Serine 89 carries the phosphoserine modification. 3',5'-cyclic AMP contacts are provided by residues 129 to 260 (LFNH…EEVP), glutamate 207, arginine 216, 261 to 378 (ILKT…EAEE), glutamate 328, and arginine 337.

It belongs to the cAMP-dependent kinase regulatory chain family. In terms of assembly, tetramer, composed of 2 regulatory (R) and 2 catalytic (C) subunits. In the presence of cAMP it dissociates into 2 active monomeric C subunits and an R dimer.

In Neurospora crassa (strain ATCC 24698 / 74-OR23-1A / CBS 708.71 / DSM 1257 / FGSC 987), this protein is cAMP-dependent protein kinase regulatory subunit (mcb).